The sequence spans 334 residues: ADP-L-glycero-D-manno-heptose-6-epimerase (334 aa).

Residues 11–12 (FI), 32–33 (DN), lysine 39, lysine 54, 77–81 (QGACS), and asparagine 94 each bind NADP(+). Tyrosine 141 serves as the catalytic Proton acceptor. Lysine 145 is a binding site for NADP(+). Residue asparagine 171 participates in substrate binding. NADP(+) is bound by residues valine 172 and lysine 180. The active-site Proton acceptor is the lysine 180. Residues arginine 182, histidine 189, 203-206 (FGSN), arginine 216, and tyrosine 295 each bind substrate.

The protein belongs to the NAD(P)-dependent epimerase/dehydratase family. HldD subfamily. Homopentamer. NADP(+) is required as a cofactor.

It catalyses the reaction ADP-D-glycero-beta-D-manno-heptose = ADP-L-glycero-beta-D-manno-heptose. It functions in the pathway nucleotide-sugar biosynthesis; ADP-L-glycero-beta-D-manno-heptose biosynthesis; ADP-L-glycero-beta-D-manno-heptose from D-glycero-beta-D-manno-heptose 7-phosphate: step 4/4. Functionally, catalyzes the interconversion between ADP-D-glycero-beta-D-manno-heptose and ADP-L-glycero-beta-D-manno-heptose via an epimerization at carbon 6 of the heptose. This Neisseria gonorrhoeae (strain ATCC 700825 / FA 1090) protein is ADP-L-glycero-D-manno-heptose-6-epimerase.